We begin with the raw amino-acid sequence, 520 residues long: 2-isopropylmalate synthase (520 aa).

The 263-residue stretch at 5 to 267 (VIIFDTTLRD…HTNINHQEIY (263 aa)) folds into the Pyruvate carboxyltransferase domain. Mn(2+)-binding residues include Asp-14, His-202, His-204, and Asn-238. A regulatory domain region spans residues 392 to 520 (RLDYFSVQSG…RLQQNNQEMV (129 aa)).

It belongs to the alpha-IPM synthase/homocitrate synthase family. LeuA type 1 subfamily. In terms of assembly, homodimer. Requires Mn(2+) as cofactor.

The protein localises to the cytoplasm. It carries out the reaction 3-methyl-2-oxobutanoate + acetyl-CoA + H2O = (2S)-2-isopropylmalate + CoA + H(+). The protein operates within amino-acid biosynthesis; L-leucine biosynthesis; L-leucine from 3-methyl-2-oxobutanoate: step 1/4. Catalyzes the condensation of the acetyl group of acetyl-CoA with 3-methyl-2-oxobutanoate (2-ketoisovalerate) to form 3-carboxy-3-hydroxy-4-methylpentanoate (2-isopropylmalate). In Yersinia enterocolitica serotype O:8 / biotype 1B (strain NCTC 13174 / 8081), this protein is 2-isopropylmalate synthase.